Here is a 668-residue protein sequence, read N- to C-terminus: Packaging protein UL32 homolog (668 aa).

Positions 1–10 (MNPSTHVSSN) are enriched in polar residues. Residues 1 to 35 (MNPSTHVSSNGPTTPPHGPHTTFLPPTSPAPSTSS) are disordered. The segment covering 19–35 (PHTTFLPPTSPAPSTSS) has biased composition (low complexity). Positions 200, 203, 276, and 282 each coordinate Zn(2+). The tract at residues 200–282 (CNLCAIISIC…FHLHFFINRC (83 aa)) is zinc finger 1. Basic and acidic residues-rich tracts occupy residues 392–401 (SEREDARMMM) and 410–419 (GEKGGDDPGR). The segment at 392 to 430 (SEREDARMMMEEEEDEEGGEKGGDDPGRHNGGGTSGGFS) is disordered. Residues Cys-459, Cys-462, His-567, and Cys-574 each coordinate Zn(2+). A zinc finger 2 region spans residues 459 to 574 (CLLCELMACS…YKHFFCDPQC (116 aa)).

It belongs to the herpesviridae UL32 protein family.

Its subcellular location is the host cytoplasm. It localises to the host nucleus. Functionally, plays a role in efficient localization of neo-synthesized capsids to nuclear replication compartments, thereby controlling cleavage and packaging of virus genomic DNA. In Homo sapiens (Human), this protein is Packaging protein UL32 homolog (UL52).